The chain runs to 577 residues: Arginine--tRNA ligase (577 aa).

The 'HIGH' region signature appears at 122–132 (PNVAKEMHVGH).

It belongs to the class-I aminoacyl-tRNA synthetase family. In terms of assembly, monomer.

It localises to the cytoplasm. It catalyses the reaction tRNA(Arg) + L-arginine + ATP = L-arginyl-tRNA(Arg) + AMP + diphosphate. The polypeptide is Arginine--tRNA ligase (Salmonella newport (strain SL254)).